The following is a 184-amino-acid chain: Protein GrpE (184 aa).

The segment covering 1 to 17 has biased composition (basic and acidic residues); sequence MQHEDKTPEQQENKTPE. The disordered stretch occupies residues 1 to 39; the sequence is MQHEDKTPEQQENKTPETELQQENAPATPQEAGAAGSID. A compositionally biased stretch (polar residues) spans 18–27; it reads TELQQENAPA.

The protein belongs to the GrpE family. As to quaternary structure, homodimer.

Its subcellular location is the cytoplasm. Participates actively in the response to hyperosmotic and heat shock by preventing the aggregation of stress-denatured proteins, in association with DnaK and GrpE. It is the nucleotide exchange factor for DnaK and may function as a thermosensor. Unfolded proteins bind initially to DnaJ; upon interaction with the DnaJ-bound protein, DnaK hydrolyzes its bound ATP, resulting in the formation of a stable complex. GrpE releases ADP from DnaK; ATP binding to DnaK triggers the release of the substrate protein, thus completing the reaction cycle. Several rounds of ATP-dependent interactions between DnaJ, DnaK and GrpE are required for fully efficient folding. In Methylobacillus flagellatus (strain ATCC 51484 / DSM 6875 / VKM B-1610 / KT), this protein is Protein GrpE.